Here is a 177-residue protein sequence, read N- to C-terminus: uncharacterized protein (177 aa).

To B.subtilis YutG.

This is an uncharacterized protein from Bacillus subtilis (strain 168).